Here is a 135-residue protein sequence, read N- to C-terminus: DNA-directed RNA polymerase subunit omega (135 aa).

It belongs to the RNA polymerase subunit omega family. The RNAP catalytic core consists of 2 alpha, 1 beta, 1 beta' and 1 omega subunit. When a sigma factor is associated with the core the holoenzyme is formed, which can initiate transcription.

The catalysed reaction is RNA(n) + a ribonucleoside 5'-triphosphate = RNA(n+1) + diphosphate. Functionally, promotes RNA polymerase assembly. Latches the N- and C-terminal regions of the beta' subunit thereby facilitating its interaction with the beta and alpha subunits. In Rhizobium meliloti (strain 1021) (Ensifer meliloti), this protein is DNA-directed RNA polymerase subunit omega.